The following is a 93-amino-acid chain: Small ribosomal subunit protein bS18 (93 aa).

It belongs to the bacterial ribosomal protein bS18 family. In terms of assembly, part of the 30S ribosomal subunit. Forms a tight heterodimer with protein bS6.

Its function is as follows. Binds as a heterodimer with protein bS6 to the central domain of the 16S rRNA, where it helps stabilize the platform of the 30S subunit. In Delftia acidovorans (strain DSM 14801 / SPH-1), this protein is Small ribosomal subunit protein bS18.